The sequence spans 559 residues: Dihydroxy-acid dehydratase (559 aa).

Asp78 contacts Mg(2+). Residue Cys119 participates in [2Fe-2S] cluster binding. The Mg(2+) site is built by Asp120 and Lys121. An N6-carboxylysine modification is found at Lys121. Residue Cys192 participates in [2Fe-2S] cluster binding. Glu446 contacts Mg(2+). Ser472 functions as the Proton acceptor in the catalytic mechanism.

Belongs to the IlvD/Edd family. In terms of assembly, homodimer. Requires [2Fe-2S] cluster as cofactor. The cofactor is Mg(2+).

It catalyses the reaction (2R)-2,3-dihydroxy-3-methylbutanoate = 3-methyl-2-oxobutanoate + H2O. The catalysed reaction is (2R,3R)-2,3-dihydroxy-3-methylpentanoate = (S)-3-methyl-2-oxopentanoate + H2O. Its pathway is amino-acid biosynthesis; L-isoleucine biosynthesis; L-isoleucine from 2-oxobutanoate: step 3/4. It participates in amino-acid biosynthesis; L-valine biosynthesis; L-valine from pyruvate: step 3/4. In terms of biological role, functions in the biosynthesis of branched-chain amino acids. Catalyzes the dehydration of (2R,3R)-2,3-dihydroxy-3-methylpentanoate (2,3-dihydroxy-3-methylvalerate) into 2-oxo-3-methylpentanoate (2-oxo-3-methylvalerate) and of (2R)-2,3-dihydroxy-3-methylbutanoate (2,3-dihydroxyisovalerate) into 2-oxo-3-methylbutanoate (2-oxoisovalerate), the penultimate precursor to L-isoleucine and L-valine, respectively. The polypeptide is Dihydroxy-acid dehydratase (Wolinella succinogenes (strain ATCC 29543 / DSM 1740 / CCUG 13145 / JCM 31913 / LMG 7466 / NCTC 11488 / FDC 602W) (Vibrio succinogenes)).